The primary structure comprises 243 residues: Orotidine 5'-phosphate decarboxylase (243 aa).

Residues Asp19, Lys41, Asp69–Thr78, Thr124, Arg185, Gln194, Gly214, and Arg215 each bind substrate. Lys71 acts as the Proton donor in catalysis.

Belongs to the OMP decarboxylase family. Type 1 subfamily. In terms of assembly, homodimer.

It carries out the reaction orotidine 5'-phosphate + H(+) = UMP + CO2. The protein operates within pyrimidine metabolism; UMP biosynthesis via de novo pathway; UMP from orotate: step 2/2. Functionally, catalyzes the decarboxylation of orotidine 5'-monophosphate (OMP) to uridine 5'-monophosphate (UMP). In Xanthomonas oryzae pv. oryzae (strain MAFF 311018), this protein is Orotidine 5'-phosphate decarboxylase.